The following is a 529-amino-acid chain: Type I restriction enzyme EcoKI methylase subunit (529 aa).

S-adenosyl-L-methionine contacts are provided by residues 148 to 153, 178 to 180, and Glu216; these read QYFTPR and TAG.

This sequence belongs to the N(4)/N(6)-methyltransferase family. In terms of assembly, the type I restriction/modification system is composed of three polypeptides R, M and S. The restriction enzyme has stoichiometry R(2)M(2)S(1). The methyltransferase is composed of M(2)S(1). (Microbial infection) Interacts with Escherichia phage T7 protein Ocr; this interaction leads to the inhibition of the methyltransferase restriction enzyme M.EcoKI composed of M(2)S(1).

The enzyme catalyses a 2'-deoxyadenosine in DNA + S-adenosyl-L-methionine = an N(6)-methyl-2'-deoxyadenosine in DNA + S-adenosyl-L-homocysteine + H(+). In terms of biological role, the subtype gamma methyltransferase (M) subunit of a type I restriction enzyme. The M and S subunits together form a methyltransferase (MTase) that methylates A-2 on the top and A-3 on the bottom strand of the sequence 5'-AACN(6)GTGC-3'. In the presence of the R subunit the complex can also act as an endonuclease, binding to the same target sequence but cutting the DNA some distance from this site. Whether the DNA is cut or modified depends on the methylation state of the target sequence. When the target site is unmodified, the DNA is cut. When the target site is hemimethylated, the complex acts as a maintenance MTase modifying the DNA so that both strands become methylated. After locating a non-methylated recognition site, the enzyme complex serves as a molecular motor that translocates DNA in an ATP-dependent manner until a collision occurs that triggers cleavage. The polypeptide is Type I restriction enzyme EcoKI methylase subunit (Escherichia coli (strain K12)).